The sequence spans 319 residues: Ribosomal RNA small subunit methyltransferase H (319 aa).

Residues 38-40 (GGH), D58, F82, D104, and Q111 each bind S-adenosyl-L-methionine.

This sequence belongs to the methyltransferase superfamily. RsmH family.

It localises to the cytoplasm. It carries out the reaction cytidine(1402) in 16S rRNA + S-adenosyl-L-methionine = N(4)-methylcytidine(1402) in 16S rRNA + S-adenosyl-L-homocysteine + H(+). Its function is as follows. Specifically methylates the N4 position of cytidine in position 1402 (C1402) of 16S rRNA. This chain is Ribosomal RNA small subunit methyltransferase H, found in Histophilus somni (strain 129Pt) (Haemophilus somnus).